The primary structure comprises 147 residues: Acidic phospholipase A2 S3-24 (147 aa).

The first 19 residues, 1–19 (MYPAHLLVLLAVCVSLLGA), serve as a signal peptide directing secretion. Positions 20–27 (SDMPPQPL) are excised as a propeptide. 7 cysteine pairs are disulfide-bonded: Cys-38-Cys-99, Cys-54-Cys-146, Cys-56-Cys-72, Cys-71-Cys-127, Cys-78-Cys-120, Cys-88-Cys-113, and Cys-106-Cys-118. The Ca(2+) site is built by Tyr-55, Gly-57, and Gly-59. His-75 is a catalytic residue. Asp-76 contributes to the Ca(2+) binding site. Asp-121 is an active-site residue.

This sequence belongs to the phospholipase A2 family. Group I subfamily. D49 sub-subfamily. Requires Ca(2+) as cofactor. In terms of tissue distribution, expressed by the venom gland.

It is found in the secreted. It carries out the reaction a 1,2-diacyl-sn-glycero-3-phosphocholine + H2O = a 1-acyl-sn-glycero-3-phosphocholine + a fatty acid + H(+). Snake venom phospholipase A2 (PLA2) that inhibits collagen-induced platelet aggregation. PLA2 catalyzes the calcium-dependent hydrolysis of the 2-acyl groups in 3-sn-phosphoglycerides. This chain is Acidic phospholipase A2 S3-24, found in Austrelaps superbus (Lowland copperhead snake).